The primary structure comprises 353 residues: Photosystem II D2 protein (353 aa).

At Thr-2 the chain carries N-acetylthreonine. Thr-2 carries the post-translational modification Phosphothreonine. Residues Cys-41–Thr-61 form a helical membrane-spanning segment. Chlorophyll a is bound at residue His-118. A helical transmembrane segment spans residues Gly-125–Pro-141. The pheophytin a site is built by Gln-130 and Asn-143. A helical transmembrane segment spans residues Val-153–Ser-166. His-198 contacts chlorophyll a. The chain crosses the membrane as a helical span at residues Ala-208–Asp-228. Positions 215 and 262 each coordinate a plastoquinone. Position 215 (His-215) interacts with Fe cation. His-269 contributes to the Fe cation binding site. Residues Gly-279–Arg-295 traverse the membrane as a helical segment.

Belongs to the reaction center PufL/M/PsbA/D family. PSII is composed of 1 copy each of membrane proteins PsbA, PsbB, PsbC, PsbD, PsbE, PsbF, PsbH, PsbI, PsbJ, PsbK, PsbL, PsbM, PsbT, PsbX, PsbY, PsbZ, Psb30/Ycf12, at least 3 peripheral proteins of the oxygen-evolving complex and a large number of cofactors. It forms dimeric complexes. The cofactor is The D1/D2 heterodimer binds P680, chlorophylls that are the primary electron donor of PSII, and subsequent electron acceptors. It shares a non-heme iron and each subunit binds pheophytin, quinone, additional chlorophylls, carotenoids and lipids. There is also a Cl(-1) ion associated with D1 and D2, which is required for oxygen evolution. The PSII complex binds additional chlorophylls, carotenoids and specific lipids..

It localises to the plastid. It is found in the chloroplast thylakoid membrane. It carries out the reaction 2 a plastoquinone + 4 hnu + 2 H2O = 2 a plastoquinol + O2. In terms of biological role, photosystem II (PSII) is a light-driven water:plastoquinone oxidoreductase that uses light energy to abstract electrons from H(2)O, generating O(2) and a proton gradient subsequently used for ATP formation. It consists of a core antenna complex that captures photons, and an electron transfer chain that converts photonic excitation into a charge separation. The D1/D2 (PsbA/PsbD) reaction center heterodimer binds P680, the primary electron donor of PSII as well as several subsequent electron acceptors. D2 is needed for assembly of a stable PSII complex. This is Photosystem II D2 protein from Barbarea verna (Land cress).